The primary structure comprises 637 residues: Chaperone protein HtpG (637 aa).

Residues 1–345 are a; substrate-binding; the sequence is MSHQETHGFQ…SNDLPLNVSR (345 aa). Positions 346–562 are b; that stretch reads EILQDNKVTR…EGEMSSQMIK (217 aa). The tract at residues 563 to 637 is c; the sequence is LMQAAGQPVP…VNQMLLKSVG (75 aa).

Belongs to the heat shock protein 90 family. In terms of assembly, homodimer.

Its subcellular location is the cytoplasm. In terms of biological role, molecular chaperone. Has ATPase activity. The chain is Chaperone protein HtpG from Shewanella amazonensis (strain ATCC BAA-1098 / SB2B).